The chain runs to 330 residues: MSLSATQLKALEDSVLNTSGKVLLHDRVRALFTLKSLKNEDAIRIISKGFQDSAALLKHELAYCLGQIRNPLALPVLESVLRNPSEDPMVRHEAAEAMGAISTADSIPILKQYLSDPDRSVRETCEIAIAKIEWDKTEEGAKNDKATRDENRLPLYTSIDPAPATSGLLTGAPRPEEISQTKIDELRDNLLDVNRPLFERYRAMFALRNIGSPAAVDALAAGFSGDSALFKHEIAFVFGQLLSPHSVPCLIEVLQNSPESDMVRHEAAEALGGIATPEVLPPLKEWVARDDAPVVVRESCQVALDLWEYENSGDFQYANGLESPSTPISV.

HEAT-like PBS-type repeat units lie at residues 57–83 (LKHE…VLRN), 90–116 (VRHE…YLSD), and 199–225 (ERYR…GFSG). Residues His59, Glu60, His92, and Glu93 each coordinate Fe cation. Fe cation is bound by residues His232, Glu233, His265, and Glu266. The stretch at 263–289 (VRHEAAEALGGIATPEVLPPLKEWVAR) is one HEAT-like PBS-type 4 repeat.

The protein belongs to the deoxyhypusine hydroxylase family. Requires Fe(2+) as cofactor.

It is found in the cytoplasm. Its subcellular location is the nucleus. The enzyme catalyses [eIF5A protein]-deoxyhypusine + AH2 + O2 = [eIF5A protein]-hypusine + A + H2O. Its pathway is protein modification; eIF5A hypusination. Functionally, catalyzes the hydroxylation of the N(6)-(4-aminobutyl)-L-lysine intermediate to form hypusine, an essential post-translational modification only found in mature eIF-5A factor. This is Deoxyhypusine hydroxylase from Lentinula edodes (Shiitake mushroom).